A 319-amino-acid polypeptide reads, in one-letter code: Transcriptional regulator LsrR (319 aa).

Residues 32-55 constitute a DNA-binding region (H-T-H motif); it reads QSEISERLGLTRLKVSRLLEKGHQ.

This sequence belongs to the SorC transcriptional regulatory family.

Its subcellular location is the cytoplasm. Its activity is regulated as follows. Inactivated by phosphorylated autoinducer-2 (phospho-AI-2). Phospho-AI-2 acts by binding to LsrR, which is then unable to bind to the promoter regions, allowing the transcription of the target genes. Transcriptional regulator that represses the expression of the lsr operon (lsrACDBFGE) in the absence of the quorum-sensing signaling molecule autoinducer 2 (AI-2). It also represses the expression of the lsrRK operon. Acts by binding to the intergenic region between the lsr operon and lsrR. In the presence of phosphorylated autoinducer-2 (phospho-AI-2), LsrR is inactivated, leading to the transcription of the genes. The regulatory function of LsrR was thought to be limited to the lsr operon, but it was subsequently shown to be involved, directly or indirectly, in the regulation of SPI-1 and flagella genes. It negatively regulates the expression of those genes, which reduces the ability of Salmonella to invade host cells. This chain is Transcriptional regulator LsrR, found in Salmonella typhimurium (strain LT2 / SGSC1412 / ATCC 700720).